Here is a 317-residue protein sequence, read N- to C-terminus: Acetyl-coenzyme A carboxylase carboxyl transferase subunit alpha (317 aa).

The 255-residue stretch at 39–293 (KLEDKNRKLT…KDALGASLER (255 aa)) folds into the CoA carboxyltransferase C-terminal domain.

This sequence belongs to the AccA family. Acetyl-CoA carboxylase is a heterohexamer composed of biotin carboxyl carrier protein (AccB), biotin carboxylase (AccC) and two subunits each of ACCase subunit alpha (AccA) and ACCase subunit beta (AccD).

Its subcellular location is the cytoplasm. The catalysed reaction is N(6)-carboxybiotinyl-L-lysyl-[protein] + acetyl-CoA = N(6)-biotinyl-L-lysyl-[protein] + malonyl-CoA. The protein operates within lipid metabolism; malonyl-CoA biosynthesis; malonyl-CoA from acetyl-CoA: step 1/1. Functionally, component of the acetyl coenzyme A carboxylase (ACC) complex. First, biotin carboxylase catalyzes the carboxylation of biotin on its carrier protein (BCCP) and then the CO(2) group is transferred by the carboxyltransferase to acetyl-CoA to form malonyl-CoA. This Chromohalobacter salexigens (strain ATCC BAA-138 / DSM 3043 / CIP 106854 / NCIMB 13768 / 1H11) protein is Acetyl-coenzyme A carboxylase carboxyl transferase subunit alpha.